The sequence spans 388 residues: Na(+)/H(+) antiporter NhaA (388 aa).

A run of 11 helical transmembrane segments spans residues 8 to 28, 57 to 77, 93 to 113, 123 to 143, 152 to 172, 175 to 195, 210 to 230, 254 to 274, 278 to 298, 328 to 348, and 361 to 381; these read FFSA…LGLL, LAEF…IAEI, ILPL…YGLI, GWAI…LALG, VWLM…IALF, SHLN…MIGL, GVVL…AGVI, IIAP…SMGM, AMSF…GLFL, LFGL…IAEL, and YGIL…LRFL.

This sequence belongs to the NhaA Na(+)/H(+) (TC 2.A.33) antiporter family.

The protein localises to the cell inner membrane. The catalysed reaction is Na(+)(in) + 2 H(+)(out) = Na(+)(out) + 2 H(+)(in). Na(+)/H(+) antiporter that extrudes sodium in exchange for external protons. This is Na(+)/H(+) antiporter NhaA from Zymomonas mobilis subsp. mobilis (strain ATCC 31821 / ZM4 / CP4).